A 307-amino-acid polypeptide reads, in one-letter code: Alpha N-terminal protein methyltransferase 1 (307 aa).

Residues Glu-38–Ala-51 show a composition bias toward low complexity. Residues Glu-38–Gly-60 are disordered. S-adenosyl-L-methionine is bound by residues Gly-123, Arg-128, Glu-145–Val-147, Leu-179–Gln-180, and Gln-195.

This sequence belongs to the methyltransferase superfamily. NTM1 family.

The catalysed reaction is N-terminal L-alanyl-L-prolyl-L-lysyl-[protein] + 3 S-adenosyl-L-methionine = N-terminal N,N,N-trimethyl-L-alanyl-L-prolyl-L-lysyl-[protein] + 3 S-adenosyl-L-homocysteine + 3 H(+). The enzyme catalyses N-terminal L-seryl-L-prolyl-L-lysyl-[protein] + 3 S-adenosyl-L-methionine = N-terminal N,N,N-trimethyl-L-seryl-L-prolyl-L-lysyl-[protein] + 3 S-adenosyl-L-homocysteine + 3 H(+). It carries out the reaction N-terminal L-prolyl-L-prolyl-L-lysyl-[protein] + 2 S-adenosyl-L-methionine = N-terminal N,N-dimethyl-L-prolyl-L-prolyl-L-lysyl-[protein] + 2 S-adenosyl-L-homocysteine + 2 H(+). Alpha-N-methyltransferase that methylates the N-terminus of target proteins containing the N-terminal motif [Ala/Pro/Ser]-Pro-Lys when the initiator Met is cleaved. Specifically catalyzes mono-, di- or tri-methylation of exposed alpha-amino group of Ala or Ser residue in the [Ala/Ser]-Pro-Lys motif and mono- or di-methylation of Pro in the Pro-Pro-Lys motif. The polypeptide is Alpha N-terminal protein methyltransferase 1 (Oryza sativa subsp. japonica (Rice)).